The sequence spans 90 residues: Small ribosomal subunit protein uS15c (90 aa).

Belongs to the universal ribosomal protein uS15 family. Part of the 30S ribosomal subunit.

It is found in the plastid. Its subcellular location is the chloroplast. The polypeptide is Small ribosomal subunit protein uS15c (rps15) (Panax ginseng (Korean ginseng)).